The following is a 125-amino-acid chain: Large ribosomal subunit protein bL12 (125 aa).

It belongs to the bacterial ribosomal protein bL12 family. As to quaternary structure, homodimer. Part of the ribosomal stalk of the 50S ribosomal subunit. Forms a multimeric L10(L12)X complex, where L10 forms an elongated spine to which 2 to 4 L12 dimers bind in a sequential fashion. Binds GTP-bound translation factors.

Its function is as follows. Forms part of the ribosomal stalk which helps the ribosome interact with GTP-bound translation factors. Is thus essential for accurate translation. In Rickettsia prowazekii (strain Madrid E), this protein is Large ribosomal subunit protein bL12.